The primary structure comprises 822 residues: Glycerol-3-phosphate acyltransferase (822 aa).

Positions 304-309 (CHRSHM) match the HXXXXD motif motif.

It belongs to the GPAT/DAPAT family.

It localises to the cell inner membrane. It catalyses the reaction sn-glycerol 3-phosphate + an acyl-CoA = a 1-acyl-sn-glycero-3-phosphate + CoA. It functions in the pathway phospholipid metabolism; CDP-diacylglycerol biosynthesis; CDP-diacylglycerol from sn-glycerol 3-phosphate: step 1/3. This Yersinia enterocolitica serotype O:8 / biotype 1B (strain NCTC 13174 / 8081) protein is Glycerol-3-phosphate acyltransferase.